A 1079-amino-acid chain; its full sequence is DNA-directed RNA polymerase subunit beta (1079 aa).

A disordered region spans residues arginine 963–arginine 982. Residues glycine 966–proline 975 are compositionally biased toward polar residues.

It belongs to the RNA polymerase beta chain family. In terms of assembly, in plastids the minimal PEP RNA polymerase catalytic core is composed of four subunits: alpha, beta, beta', and beta''. When a (nuclear-encoded) sigma factor is associated with the core the holoenzyme is formed, which can initiate transcription.

It is found in the plastid. It localises to the chloroplast. The enzyme catalyses RNA(n) + a ribonucleoside 5'-triphosphate = RNA(n+1) + diphosphate. DNA-dependent RNA polymerase catalyzes the transcription of DNA into RNA using the four ribonucleoside triphosphates as substrates. The chain is DNA-directed RNA polymerase subunit beta from Pelargonium hortorum (Common geranium).